Here is a 120-residue protein sequence, read N- to C-terminus: MERHQHLLSEYQQILTLSEQMLMLATVENWDALVDLEMAYLKAVENTANITISSCSSPVLQELLRQKLRSILENEIEIKRLLQRRLDKLSELVGQSTRQQAVNRTYGQFPDQALLLGETQ.

The tract at residues 1 to 50 (MERHQHLLSEYQQILTLSEQMLMLATVENWDALVDLEMAYLKAVENTANI) is required for homodimerization. The interval 60-98 (LQELLRQKLRSILENEIEIKRLLQRRLDKLSELVGQSTR) is fliD binding.

It belongs to the FliT family. In terms of assembly, homodimer. Interacts with FliD and FlhC.

It localises to the cytoplasm. Its subcellular location is the cytosol. Functionally, dual-function protein that regulates the transcription of class 2 flagellar operons and that also acts as an export chaperone for the filament-capping protein FliD. As a transcriptional regulator, acts as an anti-FlhDC factor; it directly binds FlhC, thus inhibiting the binding of the FlhC/FlhD complex to class 2 promoters, resulting in decreased expression of class 2 flagellar operons. As a chaperone, effects FliD transition to the membrane by preventing its premature polymerization, and by directing it to the export apparatus. The sequence is that of Flagellar protein FliT from Yersinia pseudotuberculosis serotype IB (strain PB1/+).